The primary structure comprises 146 residues: 3-dehydroquinate dehydratase (146 aa).

Tyr22 serves as the catalytic Proton acceptor. Asn73, His79, and Asp86 together coordinate substrate. The active-site Proton donor is His99. Substrate-binding positions include 100–101 and Arg110; that span reads VS.

Belongs to the type-II 3-dehydroquinase family. Homododecamer.

It carries out the reaction 3-dehydroquinate = 3-dehydroshikimate + H2O. The protein operates within metabolic intermediate biosynthesis; chorismate biosynthesis; chorismate from D-erythrose 4-phosphate and phosphoenolpyruvate: step 3/7. Its function is as follows. Catalyzes a trans-dehydration via an enolate intermediate. The sequence is that of 3-dehydroquinate dehydratase from Kineococcus radiotolerans (strain ATCC BAA-149 / DSM 14245 / SRS30216).